The sequence spans 626 residues: Phosphomethylpyrimidine synthase (626 aa).

The tract at residues 1 to 22 is disordered; sequence MTKQEKAINLSESAQVDQQSVQ. The segment covering 10–22 has biased composition (polar residues); that stretch reads LSESAQVDQQSVQ. Substrate contacts are provided by residues Asn-232, Met-261, Tyr-290, His-326, 346–348, 387–390, and Glu-426; these read SRG and DGLR. A Zn(2+)-binding site is contributed by His-430. Tyr-453 provides a ligand contact to substrate. Residue His-494 coordinates Zn(2+). The [4Fe-4S] cluster site is built by Cys-574, Cys-577, and Cys-582.

The protein belongs to the ThiC family. Homodimer. It depends on [4Fe-4S] cluster as a cofactor.

The catalysed reaction is 5-amino-1-(5-phospho-beta-D-ribosyl)imidazole + S-adenosyl-L-methionine = 4-amino-2-methyl-5-(phosphooxymethyl)pyrimidine + CO + 5'-deoxyadenosine + formate + L-methionine + 3 H(+). It functions in the pathway cofactor biosynthesis; thiamine diphosphate biosynthesis. Its function is as follows. Catalyzes the synthesis of the hydroxymethylpyrimidine phosphate (HMP-P) moiety of thiamine from aminoimidazole ribotide (AIR) in a radical S-adenosyl-L-methionine (SAM)-dependent reaction. The polypeptide is Phosphomethylpyrimidine synthase (Pseudomonas putida (strain GB-1)).